The following is a 96-amino-acid chain: Co-chaperonin GroES (96 aa).

It belongs to the GroES chaperonin family. In terms of assembly, heptamer of 7 subunits arranged in a ring. Interacts with the chaperonin GroEL.

It is found in the cytoplasm. In terms of biological role, together with the chaperonin GroEL, plays an essential role in assisting protein folding. The GroEL-GroES system forms a nano-cage that allows encapsulation of the non-native substrate proteins and provides a physical environment optimized to promote and accelerate protein folding. GroES binds to the apical surface of the GroEL ring, thereby capping the opening of the GroEL channel. The protein is Co-chaperonin GroES of Buchnera aphidicola subsp. Schizaphis graminum (strain Sg).